Here is a 536-residue protein sequence, read N- to C-terminus: Interferon alpha/beta receptor 2 (536 aa).

Positions methionine 1–glycine 26 are cleaved as a signal peptide. Residues isoleucine 27–threonine 246 lie on the Extracellular side of the membrane. Intrachain disulfides connect cysteine 39/cysteine 122 and cysteine 85/cysteine 93. Asparagine 58, asparagine 87, asparagine 101, asparagine 147, and asparagine 191 each carry an N-linked (GlcNAc...) asparagine glycan. Cysteines 210 and 230 form a disulfide. The helical transmembrane segment at isoleucine 247–leucine 267 threads the bilayer. Residues lysine 268–asparagine 536 are Cytoplasmic-facing. At tyrosine 340 the chain carries Phosphotyrosine. 3 repeat units span residues serine 358–cysteine 362, serine 363–cysteine 367, and serine 368–cysteine 372. The 3 X 5 AA tandem repeats of S-L-E-D-C stretch occupies residues serine 358–cysteine 372. The segment at leucine 369 to arginine 434 is disordered. The span at threonine 420–glutamate 429 shows a compositional bias: acidic residues. A mediates interaction with STAT2 (and required for the recruitment of USP18) region spans residues glutamate 432 to glutamate 456. The residue at position 480 (serine 480) is a Phosphoserine. The disordered stretch occupies residues glutamate 487–glycine 522. Tyrosine 525 is subject to Phosphotyrosine.

This sequence belongs to the type II cytokine receptor family. In terms of assembly, heterodimer with IFNAR1; forming the receptor for type I interferon. Interacts with the transcriptional factors STAT1 and STAT2. Interacts with JAK1. Interacts with USP18; indirectly via STAT2, it negatively regulates the assembly of the ternary interferon-IFNAR1-IFNAR2 complex and therefore type I interferon signaling. Post-translationally, phosphorylated on tyrosine residues upon interferon binding. Phosphorylation at Tyr-340 or Tyr-525 are sufficient to mediate interferon dependent activation of STAT1, STAT2 and STAT3 leading to antiproliferative effects on many different cell types. In terms of tissue distribution, expressed in the endometrium. Expressed in all tissues examined except conceptus at day 15 of pregnancy.

Its subcellular location is the cell membrane. Its function is as follows. Together with IFNAR1, forms the heterodimeric receptor for type I interferons (including interferons alpha, beta, epsilon, omega and kappa). Type I interferon binding activates the JAK-STAT signaling cascade, resulting in transcriptional activation or repression of interferon-regulated genes that encode the effectors of the interferon response. Mechanistically, type I interferon-binding brings the IFNAR1 and IFNAR2 subunits into close proximity with one another, driving their associated Janus kinases (JAKs) (TYK2 bound to IFNAR1 and JAK1 bound to IFNAR2) to cross-phosphorylate one another. The activated kinases phosphorylate specific tyrosine residues on the intracellular domains of IFNAR1 and IFNAR2, forming docking sites for the STAT transcription factors (STAT1, STAT2 and STAT). STAT proteins are then phosphorylated by the JAKs, promoting their translocation into the nucleus to regulate expression of interferon-regulated genes. This chain is Interferon alpha/beta receptor 2 (IFNAR2), found in Ovis aries (Sheep).